Consider the following 184-residue polypeptide: Probable S-adenosyl-L-methionine-binding protein PYRAB06630 (184 aa).

Residues 9-140 (YRPIGIIHSP…YVPEFDVREN (132 aa)) form the TsaA-like domain. Residues 26–28 (PIQ), 65–66 (HR), Arg-89, and 120–123 (LDGT) contribute to the S-adenosyl-L-methionine site.

The protein belongs to the tRNA methyltransferase O family.

This is Probable S-adenosyl-L-methionine-binding protein PYRAB06630 from Pyrococcus abyssi (strain GE5 / Orsay).